The primary structure comprises 246 residues: Dihydroorotate dehydrogenase B (NAD(+)), electron transfer subunit (246 aa).

An FAD-binding FR-type domain is found at 3 to 95 (MEYFKGKVKE…IGPLGNGFDI (93 aa)). Residues 48-51 (RPIS) and 70-71 (GT) contribute to the FAD site. 4 residues coordinate [2Fe-2S] cluster: Cys213, Cys218, Cys221, and Cys233.

This sequence belongs to the PyrK family. In terms of assembly, heterotetramer of 2 PyrK and 2 PyrD type B subunits. The cofactor is [2Fe-2S] cluster. FAD is required as a cofactor.

Its pathway is pyrimidine metabolism; UMP biosynthesis via de novo pathway; orotate from (S)-dihydroorotate (NAD(+) route): step 1/1. In terms of biological role, responsible for channeling the electrons from the oxidation of dihydroorotate from the FMN redox center in the PyrD type B subunit to the ultimate electron acceptor NAD(+). The chain is Dihydroorotate dehydrogenase B (NAD(+)), electron transfer subunit from Clostridium perfringens (strain 13 / Type A).